Consider the following 315-residue polypeptide: MPTNQLEQLKQFTTVVADSSDFDSMKSYQPRDATTNPSLILKAAGMPDYGHLVEKAITDAGSGASPAAVIDLLLVLFGAEILKIVPGRVSTEVDARLSFDRVGSMEKARTLIALYEKQGVPRERILIKLASTWEGIRAAEKLQQEGINCNMTLLFSFPQAVAAAKAKVKLISPFVGRILDWYKKSTGQDYAPADDPGVNSVREIYTYYKRFGYETEVMGASFRNKDEILELAGCDLLTIAPKLLGELAASTDPVERKLEPEAARKAKVKRVSFDEKSFRWALNEDQMATEKLSDGIRSFAADVRKLEQLIQQQRG.

K128 serves as the catalytic Schiff-base intermediate with substrate.

The protein belongs to the transaldolase family. Type 1 subfamily. In terms of assembly, homodimer.

It is found in the cytoplasm. The enzyme catalyses D-sedoheptulose 7-phosphate + D-glyceraldehyde 3-phosphate = D-erythrose 4-phosphate + beta-D-fructose 6-phosphate. Its pathway is carbohydrate degradation; pentose phosphate pathway; D-glyceraldehyde 3-phosphate and beta-D-fructose 6-phosphate from D-ribose 5-phosphate and D-xylulose 5-phosphate (non-oxidative stage): step 2/3. Functionally, transaldolase is important for the balance of metabolites in the pentose-phosphate pathway. This chain is Transaldolase, found in Opitutus terrae (strain DSM 11246 / JCM 15787 / PB90-1).